The chain runs to 391 residues: Phosphoglycerate kinase (391 aa).

Residues Asp-21–Asn-23, Arg-36, His-59–Arg-62, Arg-113, and Arg-146 contribute to the substrate site. ATP-binding positions include Lys-197, Glu-319, and Gly-345–Thr-348.

It belongs to the phosphoglycerate kinase family. Monomer.

Its subcellular location is the cytoplasm. The enzyme catalyses (2R)-3-phosphoglycerate + ATP = (2R)-3-phospho-glyceroyl phosphate + ADP. The protein operates within carbohydrate degradation; glycolysis; pyruvate from D-glyceraldehyde 3-phosphate: step 2/5. This Stenotrophomonas maltophilia (strain R551-3) protein is Phosphoglycerate kinase.